The sequence spans 484 residues: ATP-dependent rRNA helicase RRP3 (484 aa).

Composition is skewed to low complexity over residues 1 to 14 (MPSP…SMSQ) and 22 to 34 (PSPA…APEA). The segment at 1-38 (MPSPSPEASSSMSQPGPPSRSPSPASSNPDAPEASHNK) is disordered. The Q motif signature appears at 38 to 66 (KTFADLGISPELCRACASMGFKKPSDIQA). The Helicase ATP-binding domain occupies 69-240 (IPHALEGKDI…RASLNKPVRV (172 aa)). 82 to 89 (AQTGSGKT) lines the ATP pocket. The DEAD box motif lies at 188 to 191 (DEAD). Residues 263–411 (NKDAYLLYLA…SFDVDKEAVA (149 aa)) form the Helicase C-terminal domain. Positions 425–484 (ALEMRESGTGGGGGKRGRDKGKRKTFGDGDDRDRDDDVVEAGVPRKKNKFTPGGKKKARK) are disordered. 2 stretches are compositionally biased toward basic residues: residues 439–448 (KRGRDKGKRK) and 468–484 (PRKK…KARK).

Belongs to the DEAD box helicase family. DDX47/RRP3 subfamily. Interacts with the SSU processome.

The protein resides in the nucleus. It catalyses the reaction ATP + H2O = ADP + phosphate + H(+). In terms of biological role, ATP-dependent rRNA helicase required for pre-ribosomal RNA processing. Involved in the maturation of the 35S-pre-rRNA and to its cleavage to mature 18S rRNA. The sequence is that of ATP-dependent rRNA helicase RRP3 from Cryptococcus neoformans var. neoformans serotype D (strain B-3501A) (Filobasidiella neoformans).